Here is a 423-residue protein sequence, read N- to C-terminus: 4-hydroxy-3-methylbut-2-en-1-yl diphosphate synthase (flavodoxin) (423 aa).

Positions 307, 310, 353, and 360 each coordinate [4Fe-4S] cluster.

This sequence belongs to the IspG family. [4Fe-4S] cluster serves as cofactor.

It catalyses the reaction (2E)-4-hydroxy-3-methylbut-2-enyl diphosphate + oxidized [flavodoxin] + H2O + 2 H(+) = 2-C-methyl-D-erythritol 2,4-cyclic diphosphate + reduced [flavodoxin]. It participates in isoprenoid biosynthesis; isopentenyl diphosphate biosynthesis via DXP pathway; isopentenyl diphosphate from 1-deoxy-D-xylulose 5-phosphate: step 5/6. Its function is as follows. Converts 2C-methyl-D-erythritol 2,4-cyclodiphosphate (ME-2,4cPP) into 1-hydroxy-2-methyl-2-(E)-butenyl 4-diphosphate. The protein is 4-hydroxy-3-methylbut-2-en-1-yl diphosphate synthase (flavodoxin) of Brucella anthropi (strain ATCC 49188 / DSM 6882 / CCUG 24695 / JCM 21032 / LMG 3331 / NBRC 15819 / NCTC 12168 / Alc 37) (Ochrobactrum anthropi).